Reading from the N-terminus, the 257-residue chain is Triosephosphate isomerase (257 aa).

Positions 11 and 13 each coordinate substrate. Catalysis depends on His96, which acts as the Electrophile. Glu170 serves as the catalytic Proton acceptor.

The protein belongs to the triosephosphate isomerase family. As to quaternary structure, homodimer.

The protein resides in the cytoplasm. The enzyme catalyses D-glyceraldehyde 3-phosphate = dihydroxyacetone phosphate. The catalysed reaction is dihydroxyacetone phosphate = methylglyoxal + phosphate. It functions in the pathway carbohydrate biosynthesis; gluconeogenesis. It participates in carbohydrate degradation; glycolysis; D-glyceraldehyde 3-phosphate from glycerone phosphate: step 1/1. In terms of biological role, triosephosphate isomerase is an extremely efficient metabolic enzyme that catalyzes the interconversion between dihydroxyacetone phosphate (DHAP) and D-glyceraldehyde-3-phosphate (G3P) in glycolysis and gluconeogenesis. Functionally, it is also responsible for the non-negligible production of methylglyoxal a reactive cytotoxic side-product that modifies and can alter proteins, DNA and lipids. This Giardia intestinalis (Giardia lamblia) protein is Triosephosphate isomerase.